Reading from the N-terminus, the 314-residue chain is 4-hydroxy-3-methylbut-2-enyl diphosphate reductase (314 aa).

Cysteine 12 provides a ligand contact to [4Fe-4S] cluster. (2E)-4-hydroxy-3-methylbut-2-enyl diphosphate-binding residues include histidine 41 and histidine 74. Positions 41 and 74 each coordinate dimethylallyl diphosphate. Residues histidine 41 and histidine 74 each coordinate isopentenyl diphosphate. Position 96 (cysteine 96) interacts with [4Fe-4S] cluster. Histidine 124 is a (2E)-4-hydroxy-3-methylbut-2-enyl diphosphate binding site. Histidine 124 is a dimethylallyl diphosphate binding site. Histidine 124 contacts isopentenyl diphosphate. The active-site Proton donor is the glutamate 126. A (2E)-4-hydroxy-3-methylbut-2-enyl diphosphate-binding site is contributed by threonine 167. Residue cysteine 197 participates in [4Fe-4S] cluster binding. (2E)-4-hydroxy-3-methylbut-2-enyl diphosphate is bound by residues serine 225, serine 226, asparagine 227, and serine 269. The dimethylallyl diphosphate site is built by serine 225, serine 226, asparagine 227, and serine 269. Isopentenyl diphosphate-binding residues include serine 225, serine 226, asparagine 227, and serine 269.

This sequence belongs to the IspH family. [4Fe-4S] cluster is required as a cofactor.

It catalyses the reaction isopentenyl diphosphate + 2 oxidized [2Fe-2S]-[ferredoxin] + H2O = (2E)-4-hydroxy-3-methylbut-2-enyl diphosphate + 2 reduced [2Fe-2S]-[ferredoxin] + 2 H(+). The enzyme catalyses dimethylallyl diphosphate + 2 oxidized [2Fe-2S]-[ferredoxin] + H2O = (2E)-4-hydroxy-3-methylbut-2-enyl diphosphate + 2 reduced [2Fe-2S]-[ferredoxin] + 2 H(+). It participates in isoprenoid biosynthesis; dimethylallyl diphosphate biosynthesis; dimethylallyl diphosphate from (2E)-4-hydroxy-3-methylbutenyl diphosphate: step 1/1. Its pathway is isoprenoid biosynthesis; isopentenyl diphosphate biosynthesis via DXP pathway; isopentenyl diphosphate from 1-deoxy-D-xylulose 5-phosphate: step 6/6. Its function is as follows. Catalyzes the conversion of 1-hydroxy-2-methyl-2-(E)-butenyl 4-diphosphate (HMBPP) into a mixture of isopentenyl diphosphate (IPP) and dimethylallyl diphosphate (DMAPP). Acts in the terminal step of the DOXP/MEP pathway for isoprenoid precursor biosynthesis. The protein is 4-hydroxy-3-methylbut-2-enyl diphosphate reductase of Haemophilus influenzae (strain PittEE).